The primary structure comprises 394 residues: Elongation factor Tu (394 aa).

Positions 10-204 constitute a tr-type G domain; that stretch reads KPHVNVGTIG…YLDSYIPEPE (195 aa). The G1 stretch occupies residues 19 to 26; that stretch reads GHVDHGKT. 19–26 is a GTP binding site; that stretch reads GHVDHGKT. Position 26 (threonine 26) interacts with Mg(2+). A G2 region spans residues 60–64; it reads GITIN. The segment at 81-84 is G3; sequence DCPG. GTP-binding positions include 81–85 and 136–139; these read DCPGH and NKCD. The G4 stretch occupies residues 136 to 139; that stretch reads NKCD. Residues 174-176 are G5; it reads SAL.

Belongs to the TRAFAC class translation factor GTPase superfamily. Classic translation factor GTPase family. EF-Tu/EF-1A subfamily. As to quaternary structure, monomer.

The protein resides in the cytoplasm. It catalyses the reaction GTP + H2O = GDP + phosphate + H(+). Functionally, GTP hydrolase that promotes the GTP-dependent binding of aminoacyl-tRNA to the A-site of ribosomes during protein biosynthesis. This chain is Elongation factor Tu, found in Pectobacterium atrosepticum (strain SCRI 1043 / ATCC BAA-672) (Erwinia carotovora subsp. atroseptica).